The primary structure comprises 286 residues: Mating type protein A-1 (286 aa).

The alpha box DNA-binding region spans 40–95 (AAKKKVNGFMSFRSYYSPLFSQLPQKERSPFMTILWQHDPFHNEWNFMCSVYSSIR).

The protein belongs to the MATALPHA1 family.

Its subcellular location is the nucleus. Its function is as follows. Required for expression of the heterokaryon incompatibility and sexual functions. The polypeptide is Mating type protein A-1 (MTA-1) (Neurospora africana).